The chain runs to 182 residues: Ribosome maturation factor RimM (182 aa).

The PRC barrel domain occupies 102–182 (EEGDYYWKDL…TIEVDWDPGF (81 aa)).

The protein belongs to the RimM family. Binds ribosomal protein uS19.

It localises to the cytoplasm. An accessory protein needed during the final step in the assembly of 30S ribosomal subunit, possibly for assembly of the head region. Essential for efficient processing of 16S rRNA. May be needed both before and after RbfA during the maturation of 16S rRNA. It has affinity for free ribosomal 30S subunits but not for 70S ribosomes. The polypeptide is Ribosome maturation factor RimM (Klebsiella pneumoniae (strain 342)).